The primary structure comprises 332 residues: Monoterpene synthase 25 (332 aa).

The Mg(2+) site is built by Asp115, Glu180, Asn240, Ser244, and Glu248. The DDXXXXD motif signature appears at 115-121 (DDPVVFD). The short motif at 240 to 248 (NDILSFYKE) is the NSE/DTE motif element.

It belongs to the trichodiene synthase family. Mg(2+) is required as a cofactor.

Its function is as follows. Terpene cyclase that catalyzes the cyclization of geranyl diphosphate (GPP) to myrcene and linalool. The chain is Monoterpene synthase 25 from Postia placenta (strain ATCC 44394 / Madison 698-R) (Brown rot fungus).